Reading from the N-terminus, the 283-residue chain is Bifunctional protein FolD (283 aa).

NADP(+) contacts are provided by residues 164–166 (GRS), Ser189, and Ile230.

Belongs to the tetrahydrofolate dehydrogenase/cyclohydrolase family. In terms of assembly, homodimer.

The catalysed reaction is (6R)-5,10-methylene-5,6,7,8-tetrahydrofolate + NADP(+) = (6R)-5,10-methenyltetrahydrofolate + NADPH. It catalyses the reaction (6R)-5,10-methenyltetrahydrofolate + H2O = (6R)-10-formyltetrahydrofolate + H(+). The protein operates within one-carbon metabolism; tetrahydrofolate interconversion. Functionally, catalyzes the oxidation of 5,10-methylenetetrahydrofolate to 5,10-methenyltetrahydrofolate and then the hydrolysis of 5,10-methenyltetrahydrofolate to 10-formyltetrahydrofolate. The sequence is that of Bifunctional protein FolD from Lacticaseibacillus paracasei (strain ATCC 334 / BCRC 17002 / CCUG 31169 / CIP 107868 / KCTC 3260 / NRRL B-441) (Lactobacillus paracasei).